We begin with the raw amino-acid sequence, 340 residues long: Phosphoribosylformylglycinamidine cyclo-ligase (340 aa).

This sequence belongs to the AIR synthase family.

The protein resides in the cytoplasm. It catalyses the reaction 2-formamido-N(1)-(5-O-phospho-beta-D-ribosyl)acetamidine + ATP = 5-amino-1-(5-phospho-beta-D-ribosyl)imidazole + ADP + phosphate + H(+). It functions in the pathway purine metabolism; IMP biosynthesis via de novo pathway; 5-amino-1-(5-phospho-D-ribosyl)imidazole from N(2)-formyl-N(1)-(5-phospho-D-ribosyl)glycinamide: step 2/2. This Streptococcus pyogenes serotype M6 (strain ATCC BAA-946 / MGAS10394) protein is Phosphoribosylformylglycinamidine cyclo-ligase.